Consider the following 224-residue polypeptide: UPF0111 protein CPn_0681/CP_0066/CPj0681/CpB0708 (224 aa).

This sequence belongs to the UPF0111 family.

The polypeptide is UPF0111 protein CPn_0681/CP_0066/CPj0681/CpB0708 (Chlamydia pneumoniae (Chlamydophila pneumoniae)).